The sequence spans 299 residues: uncharacterized protein (299 aa).

The disordered stretch occupies residues methionine 1–valine 38.

The protein belongs to the calycin superfamily. Fatty-acid binding protein (FABP) family.

This is an uncharacterized protein from Caenorhabditis elegans.